A 146-amino-acid chain; its full sequence is Large ribosomal subunit protein uL15 (146 aa).

Positions 1-56 (MRLHDLRPVPGSRQKPTRKGQGIGSGLGKTAGRGQKGQKARSGGGVRPGFEGGQMP) are disordered. 2 stretches are compositionally biased toward gly residues: residues 21–35 (QGIGSGLGKTAGRGQ) and 42–52 (SGGGVRPGFEG).

This sequence belongs to the universal ribosomal protein uL15 family. As to quaternary structure, part of the 50S ribosomal subunit.

In terms of biological role, binds to the 23S rRNA. This chain is Large ribosomal subunit protein uL15, found in Carboxydothermus hydrogenoformans (strain ATCC BAA-161 / DSM 6008 / Z-2901).